An 817-amino-acid polypeptide reads, in one-letter code: Protein EFR3 homolog B (817 aa).

3 positions are modified to phosphoserine: S212, S214, and S216.

It belongs to the EFR3 family. As to quaternary structure, component of a phosphatidylinositol 4-kinase (PI4K) complex, composed of PI4KA, EFR3 (EFR3A or EFR3B), TTC7 (TTC7A or TTC7B) and HYCC (HYCC1 or HYCC2). In terms of processing, palmitoylated at its N-terminus, anchoring the protein to the plasma membrane.

It is found in the cell membrane. It localises to the cytoplasm. Its subcellular location is the cytosol. In terms of biological role, component of a complex required to localize phosphatidylinositol 4-kinase (PI4K) to the plasma membrane. The complex acts as a regulator of phosphatidylinositol 4-phosphate (PtdIns(4)P) synthesis. In the complex, EFR3B probably acts as the membrane-anchoring component. Also involved in responsiveness to G-protein-coupled receptors; it is however unclear whether this role is direct or indirect. This Homo sapiens (Human) protein is Protein EFR3 homolog B.